We begin with the raw amino-acid sequence, 584 residues long: NADPH-dependent diflavin oxidoreductase 1 (584 aa).

The Flavodoxin-like domain maps to I6–Y150. Residues S12–A17, S59–G62, C97–N106, and E132 contribute to the FMN site. The 238-residue stretch at R199 to Q436 folds into the FAD-binding FR-type domain. Residues R343, R373 to S376, and G407 to S410 contribute to the FAD site. NADP(+) is bound by residues T448, S503–R504, and K509–Q513. W584 serves as a coordination point for FAD.

It belongs to the NADPH-dependent diflavin oxidoreductase NDOR1 family. In the N-terminal section; belongs to the flavodoxin family. The protein in the C-terminal section; belongs to the flavoprotein pyridine nucleotide cytochrome reductase family. In terms of assembly, interacts with dre2; as part of the cytosolic iron-sulfur (Fe-S) protein assembly (CIA) machinery. The cofactor is FAD. It depends on FMN as a cofactor.

The protein localises to the cytoplasm. The protein resides in the mitochondrion. The catalysed reaction is 2 oxidized [2Fe-2S]-[protein] + NADPH = 2 reduced [2Fe-2S]-[protein] + NADP(+) + H(+). NADPH-dependent reductase which is a central component of the cytosolic iron-sulfur (Fe-S) protein assembly (CIA) machinery. Transfers electrons from NADPH via its FAD and FMN prosthetic groups to the [2Fe-2S] cluster of dre2, another key component of the CIA machinery. In turn, this reduced cluster provides electrons for assembly of cytosolic iron-sulfur cluster proteins. Positively controls H(2)O(2)-induced cell death. The sequence is that of NADPH-dependent diflavin oxidoreductase 1 from Schizosaccharomyces pombe (strain 972 / ATCC 24843) (Fission yeast).